The sequence spans 245 residues: 1-(5-phosphoribosyl)-5-[(5-phosphoribosylamino)methylideneamino] imidazole-4-carboxamide isomerase (245 aa).

Catalysis depends on aspartate 15, which acts as the Proton acceptor. The active-site Proton donor is the aspartate 135.

Belongs to the HisA/HisF family.

It is found in the cytoplasm. The catalysed reaction is 1-(5-phospho-beta-D-ribosyl)-5-[(5-phospho-beta-D-ribosylamino)methylideneamino]imidazole-4-carboxamide = 5-[(5-phospho-1-deoxy-D-ribulos-1-ylimino)methylamino]-1-(5-phospho-beta-D-ribosyl)imidazole-4-carboxamide. It functions in the pathway amino-acid biosynthesis; L-histidine biosynthesis; L-histidine from 5-phospho-alpha-D-ribose 1-diphosphate: step 4/9. This Haloquadratum walsbyi (strain DSM 16790 / HBSQ001) protein is 1-(5-phosphoribosyl)-5-[(5-phosphoribosylamino)methylideneamino] imidazole-4-carboxamide isomerase.